The sequence spans 609 residues: Glutamine--fructose-6-phosphate aminotransferase [isomerizing] (609 aa).

Cys-2 (nucleophile; for GATase activity) is an active-site residue. The 218-residue stretch at 2 to 219 (CGIVAAVTQR…EGDIAIVARK (218 aa)) folds into the Glutamine amidotransferase type-2 domain. SIS domains lie at 288–428 (ENNI…SKKE) and 460–599 (MANT…IDQP). Catalysis depends on Lys-604, which acts as the For Fru-6P isomerization activity.

Homodimer.

The protein localises to the cytoplasm. The enzyme catalyses D-fructose 6-phosphate + L-glutamine = D-glucosamine 6-phosphate + L-glutamate. Its function is as follows. Catalyzes the first step in hexosamine metabolism, converting fructose-6P into glucosamine-6P using glutamine as a nitrogen source. This Buchnera aphidicola subsp. Acyrthosiphon pisum (strain APS) (Acyrthosiphon pisum symbiotic bacterium) protein is Glutamine--fructose-6-phosphate aminotransferase [isomerizing].